The chain runs to 206 residues: Phosphoserine phosphatase (206 aa).

Catalysis depends on aspartate 7, which acts as the Nucleophile. Mg(2+) is bound by residues aspartate 7 and aspartate 9. Aspartate 9 serves as the catalytic Proton donor. Residues glutamate 16, arginine 52, 95–96 (SG), and lysine 140 each bind substrate. Mg(2+) is bound at residue aspartate 163. Asparagine 166 provides a ligand contact to substrate.

The protein belongs to the HAD-like hydrolase superfamily. SerB family. Requires Mg(2+) as cofactor.

It catalyses the reaction O-phospho-L-serine + H2O = L-serine + phosphate. The catalysed reaction is O-phospho-D-serine + H2O = D-serine + phosphate. It participates in amino-acid biosynthesis; L-serine biosynthesis; L-serine from 3-phospho-D-glycerate: step 3/3. The protein is Phosphoserine phosphatase of Wolinella succinogenes (strain ATCC 29543 / DSM 1740 / CCUG 13145 / JCM 31913 / LMG 7466 / NCTC 11488 / FDC 602W) (Vibrio succinogenes).